The chain runs to 516 residues: MMTRVRSAVSSIIGGIMASGTGAHDSHPDLPLRFPYSRPDFLALSPDEVECSADHISRPILILKEMKLPWATGYAEVINAGKSALNEDQACCEVVELRKRPADPSSVSYTPSRRRSSLPSGDVLDTIHNPEVKELDFHYWALFDGHGGSGAAVFAAKFLHLHIEEQLQEVLEILQDPGLQPPTCLGEESPNPQLHASASGSQRGLSRAASLRGAAGAPGSPNTMAPRFFMEKKIKQESLVVGAIENAFKEMDAHIARERCAYSISGGCTALAVMFLLGKLYVANAGDSRALIVRAGELITMSSSFTPESERQRLQFLAHLQPSLLGSDFTHLEFPRRVTKREIGKRMLYRDFTMNGWAYKTVQEEDLKFPLIYGEGKKARVLATIGITRGLGDHDLKVHDSDIAIKPFLSCSPEVQVYNLCQFEHGADDVLILATDGLWDVLSNQEVADAVSGFLGNCDPDDQHRYTMAAQDLVMKARGILKDRGWRIAGDRLGSGDDISVFIIPLMYGTQQPQPS.

Disordered stretches follow at residues 102–122 and 181–202; these read ADPS…PSGD and PPTC…SGSQ. In terms of domain architecture, PPM-type phosphatase spans 106 to 506; it reads SVSYTPSRRR…DDISVFIIPL (401 aa). Residues 190-202 show a composition bias toward polar residues; that stretch reads PNPQLHASASGSQ.

This sequence belongs to the PP2C family.

It is found in the nucleus. The protein resides in the cytoplasm. It catalyses the reaction O-phospho-L-seryl-[protein] + H2O = L-seryl-[protein] + phosphate. The catalysed reaction is O-phospho-L-threonyl-[protein] + H2O = L-threonyl-[protein] + phosphate. The polypeptide is Protein phosphatase 1H (ppm1h) (Danio rerio (Zebrafish)).